The sequence spans 478 residues: NADH-quinone oxidoreductase subunit N 1 (478 aa).

14 consecutive transmembrane segments (helical) span residues 6–26 (TVLP…SGVF), 33–53 (FAIT…LVAA), 71–91 (FADV…VTFN), 99–119 (FEFP…VSAS), 121–141 (LITL…LAAF), 156–176 (FVLG…VYGF), 193–212 (PTAA…GLAF), 244–264 (IAVF…VLGQ), 265–285 (WRDL…IGAI), 299–319 (IGHM…GVSG), 321–341 (LIYL…IIAM), 364–384 (FAFV…LAGF), 388–408 (FYVF…LGII), and 438–458 (AGVS…VFHP).

It belongs to the complex I subunit 2 family. In terms of assembly, NDH-1 is composed of 14 different subunits. Subunits NuoA, H, J, K, L, M, N constitute the membrane sector of the complex.

The protein resides in the cell inner membrane. It carries out the reaction a quinone + NADH + 5 H(+)(in) = a quinol + NAD(+) + 4 H(+)(out). In terms of biological role, NDH-1 shuttles electrons from NADH, via FMN and iron-sulfur (Fe-S) centers, to quinones in the respiratory chain. The immediate electron acceptor for the enzyme in this species is believed to be ubiquinone. Couples the redox reaction to proton translocation (for every two electrons transferred, four hydrogen ions are translocated across the cytoplasmic membrane), and thus conserves the redox energy in a proton gradient. This chain is NADH-quinone oxidoreductase subunit N 1, found in Acidiphilium cryptum (strain JF-5).